A 64-amino-acid chain; its full sequence is Cytochrome b-c1 complex subunit 9 (64 aa).

Residues S2–T18 lie on the Mitochondrial matrix side of the membrane. A helical transmembrane segment spans residues S19–I43. Topologically, residues Y44–K63 are mitochondrial intermembrane.

Belongs to the UQCR10/QCR9 family. As to quaternary structure, component of the ubiquinol-cytochrome c oxidoreductase (cytochrome b-c1 complex, complex III, CIII), a multisubunit enzyme composed of 11 subunits. The complex is composed of 3 respiratory subunits cytochrome b, cytochrome c1 and Rieske protein UQCRFS1, 2 core protein subunits UQCRC1/QCR1 and UQCRC2/QCR2, and 6 low-molecular weight protein subunits UQCRH/QCR6, UQCRB/QCR7, UQCRQ/QCR8, UQCR10/QCR9, UQCR11/QCR10 and subunit 9, the cleavage product of Rieske protein UQCRFS1. The complex exists as an obligatory dimer and forms supercomplexes (SCs) in the inner mitochondrial membrane with NADH-ubiquinone oxidoreductase (complex I, CI) and cytochrome c oxidase (complex IV, CIV), resulting in different assemblies (supercomplex SCI(1)III(2)IV(1) and megacomplex MCI(2)III(2)IV(2)). Interacts with STMP1.

It is found in the mitochondrion inner membrane. Component of the ubiquinol-cytochrome c oxidoreductase, a multisubunit transmembrane complex that is part of the mitochondrial electron transport chain which drives oxidative phosphorylation. The respiratory chain contains 3 multisubunit complexes succinate dehydrogenase (complex II, CII), ubiquinol-cytochrome c oxidoreductase (cytochrome b-c1 complex, complex III, CIII) and cytochrome c oxidase (complex IV, CIV), that cooperate to transfer electrons derived from NADH and succinate to molecular oxygen, creating an electrochemical gradient over the inner membrane that drives transmembrane transport and the ATP synthase. The cytochrome b-c1 complex catalyzes electron transfer from ubiquinol to cytochrome c, linking this redox reaction to translocation of protons across the mitochondrial inner membrane, with protons being carried across the membrane as hydrogens on the quinol. In the process called Q cycle, 2 protons are consumed from the matrix, 4 protons are released into the intermembrane space and 2 electrons are passed to cytochrome c. This chain is Cytochrome b-c1 complex subunit 9 (Uqcr10), found in Mus musculus (Mouse).